The primary structure comprises 200 residues: UPF0301 protein BOV_0485 (200 aa).

The protein belongs to the UPF0301 (AlgH) family.

This is UPF0301 protein BOV_0485 from Brucella ovis (strain ATCC 25840 / 63/290 / NCTC 10512).